The chain runs to 90 residues: Large ribosomal subunit protein uL23c (90 aa).

It belongs to the universal ribosomal protein uL23 family. Part of the 50S ribosomal subunit.

The protein resides in the plastid. The protein localises to the chloroplast. In terms of biological role, binds to 23S rRNA. This chain is Large ribosomal subunit protein uL23c (rpl23), found in Oltmannsiellopsis viridis (Marine flagellate).